Consider the following 387-residue polypeptide: MTVLKMTDLDLQGKRVLIREDLNVPVKDGVVTSDARILAALPTIKLALEKGAAVMVCSHLGRPTEGEFSAENSLKPVADYLSKALGRDVALVADYLDGIEVKAGDLVLFENVRFNKGEKKNADELAQKYAALCDVFVMDAFGTAHRAEGSTHGVAKFAKVAAAGPLLAAELDALGKALKAPAKPMAAIVAGSKVSTKLDVLNSLSSVCDQLIVGGGIANTFLAAAGHPVGKSLYEPDLVETAKAIAAKVSVPLPVDVVVAKEFAESAEATVKAIADVAADDMILDIGPQTAANFAELLKSSKTILWNGPVGVFEFDQFGNGTKVLAKAIADSAAFSIAGGGDTLAAIDKYGVSAEISYISTGGGAFLEFVEGKVLPAVAILEERAKA.

Substrate contacts are provided by residues 21 to 23 (DLN), R36, 59 to 62 (HLGR), R113, and R146. Residues K197, E314, and 340-343 (GGDT) contribute to the ATP site.

This sequence belongs to the phosphoglycerate kinase family. In terms of assembly, monomer.

It localises to the cytoplasm. The catalysed reaction is (2R)-3-phosphoglycerate + ATP = (2R)-3-phospho-glyceroyl phosphate + ADP. Its pathway is carbohydrate degradation; glycolysis; pyruvate from D-glyceraldehyde 3-phosphate: step 2/5. The chain is Phosphoglycerate kinase from Pseudomonas putida (strain W619).